Here is a 443-residue protein sequence, read N- to C-terminus: Dihydroorotase (443 aa).

Zn(2+) is bound by residues His80 and His82. Substrate contacts are provided by residues 82–84 (HFR) and Asn114. Positions 170, 197, and 251 each coordinate Zn(2+). Substrate is bound at residue Asn297. Residue Asp324 coordinates Zn(2+). Asp324 is a catalytic residue. Substrate-binding positions include His328 and 342 to 343 (FG).

This sequence belongs to the metallo-dependent hydrolases superfamily. DHOase family. Class I DHOase subfamily. The cofactor is Zn(2+).

It carries out the reaction (S)-dihydroorotate + H2O = N-carbamoyl-L-aspartate + H(+). Its pathway is pyrimidine metabolism; UMP biosynthesis via de novo pathway; (S)-dihydroorotate from bicarbonate: step 3/3. Its function is as follows. Catalyzes the reversible cyclization of carbamoyl aspartate to dihydroorotate. In Wolbachia sp. subsp. Brugia malayi (strain TRS), this protein is Dihydroorotase.